The following is a 396-amino-acid chain: Large ribosomal subunit protein uL24m (396 aa).

The interval 374 to 396 (QLSLGGGQEDAATTTSPEQPKVV) is disordered. Positions 384–396 (AATTTSPEQPKVV) are enriched in polar residues.

The protein belongs to the universal ribosomal protein uL24 family. In terms of assembly, component of the mitochondrial large ribosomal subunit (mt-LSU). Mature N.crassa 74S mitochondrial ribosomes consist of a small (37S) and a large (54S) subunit. The 37S small subunit contains a 16S ribosomal RNA (16S mt-rRNA) and 32 different proteins. The 54S large subunit contains a 23S rRNA (23S mt-rRNA) and 42 different proteins. uL24m forms the wall of the exit tunnel.

Its subcellular location is the mitochondrion. Its function is as follows. Component of the mitochondrial ribosome (mitoribosome), a dedicated translation machinery responsible for the synthesis of mitochondrial genome-encoded proteins, including at least some of the essential transmembrane subunits of the mitochondrial respiratory chain. The mitoribosomes are attached to the mitochondrial inner membrane and translation products are cotranslationally integrated into the membrane. This Neurospora crassa (strain ATCC 24698 / 74-OR23-1A / CBS 708.71 / DSM 1257 / FGSC 987) protein is Large ribosomal subunit protein uL24m (mrpl40).